Reading from the N-terminus, the 1196-residue chain is Truncated transposon Ty1-A Gag-Pol polyprotein (1196 aa).

Residues 101–276 (NSYEPFQYLH…AGLDISTLLP (176 aa)) form the Integrase catalytic domain. Residues D112 and D177 each coordinate Mg(2+). 3 disordered regions span residues 397–528 (SKAV…ETEK), 533–552 (RSPSIDASPPENNSSHNIVP), and 571–628 (DLPL…DNET). The span at 401 to 410 (SPTDSTPPST) shows a compositional bias: low complexity. The span at 446–456 (STPQISNIEST) shows a compositional bias: polar residues. Basic and acidic residues predominate over residues 479 to 494 (ESSHASKSKDFRHSDS). Polar residues-rich tracts occupy residues 495 to 523 (YSENETNHTNVPISSTGGTNNKTVPQISD) and 542 to 552 (PENNSSHNIVP). A Bipartite nuclear localization signal motif is present at residues 619 to 653 (KKRSLEDNETEIKVSRDTWNTKNMRSLEPPRSKKR). One can recognise a Reverse transcriptase Ty1/copia-type domain in the interval 779–917 (NNYYITQLDI…DILGLEIKYQ (139 aa)). Positions 787, 868, 869, 1051, 1093, and 1126 each coordinate Mg(2+). The RNase H Ty1/copia-type domain occupies 1051–1193 (DASYGNQPYY…IKTFKLLTNK (143 aa)).

Post-translationally, initially, virus-like particles (VLPs) are composed of the structural unprocessed proteins Gag and Gag-Pol, and also contain the host initiator methionine tRNA (tRNA(i)-Met) which serves as a primer for minus-strand DNA synthesis, and a dimer of genomic Ty RNA. Processing of the polyproteins occurs within the particle and proceeds by an ordered pathway, called maturation. First, the protease (PR) is released by autocatalytic cleavage of the Gag-Pol polyprotein yielding capsid protein p45 and a Pol-p154 precursor protein. This cleavage is a prerequisite for subsequent processing of Pol-p154 at the remaining sites to release the mature structural and catalytic proteins. Maturation takes place prior to the RT reaction and is required to produce transposition-competent VLPs.

The protein resides in the cytoplasm. The protein localises to the nucleus. The catalysed reaction is DNA(n) + a 2'-deoxyribonucleoside 5'-triphosphate = DNA(n+1) + diphosphate. It catalyses the reaction Endonucleolytic cleavage to 5'-phosphomonoester.. Functionally, reverse transcriptase/ribonuclease H (RT) is a multifunctional enzyme that catalyzes the conversion of the retro-elements RNA genome into dsDNA within the VLP. The enzyme displays a DNA polymerase activity that can copy either DNA or RNA templates, and a ribonuclease H (RNase H) activity that cleaves the RNA strand of RNA-DNA heteroduplexes during plus-strand synthesis and hydrolyzes RNA primers. The conversion leads to a linear dsDNA copy of the retrotransposon that includes long terminal repeats (LTRs) at both ends. Integrase (IN) targets the VLP to the nucleus, where a subparticle preintegration complex (PIC) containing at least integrase and the newly synthesized dsDNA copy of the retrotransposon must transit the nuclear membrane. Once in the nucleus, integrase performs the integration of the dsDNA into the host genome. This Saccharomyces cerevisiae (strain ATCC 204508 / S288c) (Baker's yeast) protein is Truncated transposon Ty1-A Gag-Pol polyprotein (TY1B-A).